A 39-amino-acid polypeptide reads, in one-letter code: Basic phospholipase A2 (39 aa).

Ca(2+) is bound by residues tyrosine 27, glycine 29, and glycine 31.

This sequence belongs to the phospholipase A2 family. Group II subfamily. D49 sub-subfamily. Requires Ca(2+) as cofactor. As to expression, expressed by the venom gland.

Its subcellular location is the secreted. It carries out the reaction a 1,2-diacyl-sn-glycero-3-phosphocholine + H2O = a 1-acyl-sn-glycero-3-phosphocholine + a fatty acid + H(+). With respect to regulation, is selectively inhibited by the gamma-phospholipase A2 inhibitor (PLI) CgMIP-I (AC P0DQP7) but not by the alpha-PLI CgMIP-II (AC P0DQP8). Its function is as follows. Snake venom phospholipase A2 (PLA2) that shows high myotoxic activities, induces mild edema, and shows cytolytic, and anti-coagulant activities, as well as intracerebral lethal effect. Does not induce lethality at a dose of 5 ug/g, when intravenously injected into mice. PLA2 catalyzes the calcium-dependent hydrolysis of the 2-acyl groups in 3-sn-phosphoglycerides. The sequence is that of Basic phospholipase A2 from Cerrophidion godmani (Porthidium godmani).